An 892-amino-acid chain; its full sequence is Alanine--tRNA ligase (892 aa).

Residues His593, His597, Cys694, and His698 each contribute to the Zn(2+) site.

Belongs to the class-II aminoacyl-tRNA synthetase family. Requires Zn(2+) as cofactor.

The protein localises to the cytoplasm. The enzyme catalyses tRNA(Ala) + L-alanine + ATP = L-alanyl-tRNA(Ala) + AMP + diphosphate. Catalyzes the attachment of alanine to tRNA(Ala) in a two-step reaction: alanine is first activated by ATP to form Ala-AMP and then transferred to the acceptor end of tRNA(Ala). Also edits incorrectly charged Ser-tRNA(Ala) and Gly-tRNA(Ala) via its editing domain. The polypeptide is Alanine--tRNA ligase (Helicobacter hepaticus (strain ATCC 51449 / 3B1)).